Reading from the N-terminus, the 596-residue chain is Phosphomethylpyrimidine synthase 1 (596 aa).

Substrate contacts are provided by residues Asn228, Met257, Tyr286, His322, 342 to 344, 383 to 386, and Glu422; these read SRG and DGLR. His426 provides a ligand contact to Zn(2+). Position 449 (Tyr449) interacts with substrate. Residue His490 coordinates Zn(2+). Residues Cys570, Cys573, and Cys578 each coordinate [4Fe-4S] cluster.

This sequence belongs to the ThiC family. In terms of assembly, homodimer. The cofactor is [4Fe-4S] cluster.

The enzyme catalyses 5-amino-1-(5-phospho-beta-D-ribosyl)imidazole + S-adenosyl-L-methionine = 4-amino-2-methyl-5-(phosphooxymethyl)pyrimidine + CO + 5'-deoxyadenosine + formate + L-methionine + 3 H(+). Its pathway is cofactor biosynthesis; thiamine diphosphate biosynthesis. Catalyzes the synthesis of the hydroxymethylpyrimidine phosphate (HMP-P) moiety of thiamine from aminoimidazole ribotide (AIR) in a radical S-adenosyl-L-methionine (SAM)-dependent reaction. The polypeptide is Phosphomethylpyrimidine synthase 1 (Syntrophotalea carbinolica (strain DSM 2380 / NBRC 103641 / GraBd1) (Pelobacter carbinolicus)).